The primary structure comprises 311 residues: p-hydroxybenzoic acid efflux pump subunit AaeA (311 aa).

Residues 11 to 31 (IAITLILVLLGIIAIFKAWVF) traverse the membrane as a helical segment.

The protein belongs to the membrane fusion protein (MFP) (TC 8.A.1) family.

It is found in the cell inner membrane. Forms an efflux pump with AaeB. In Serratia proteamaculans (strain 568), this protein is p-hydroxybenzoic acid efflux pump subunit AaeA.